Here is a 547-residue protein sequence, read N- to C-terminus: Alpha-humulene/(-)-(E)-beta-caryophyllene synthase (547 aa).

Residues arginine 262, aspartate 299, aspartate 303, arginine 442, and aspartate 445 each contribute to the (2E,6E)-farnesyl diphosphate site. Mg(2+) contacts are provided by aspartate 299 and aspartate 303. The short motif at aspartate 299 to aspartate 303 is the DDXXD motif element. Mg(2+) contacts are provided by aspartate 445, aspartate 446, serine 449, and glutamate 453.

The protein belongs to the terpene synthase family. Tpsa subfamily. In terms of assembly, monomer. It depends on Mg(2+) as a cofactor. Requires Mn(2+) as cofactor. Expressed exclusively in flowers. Expressed in the flower stigmata and also detected in the mesocarp cell layers of the silique wall.

The protein localises to the cytoplasm. It catalyses the reaction (2E,6E)-farnesyl diphosphate = (-)-(E)-beta-caryophyllene + diphosphate. The catalysed reaction is (2E,6E)-farnesyl diphosphate = alpha-copaene + diphosphate. It carries out the reaction (2E,6E)-farnesyl diphosphate = alpha-humulene + diphosphate. The enzyme catalyses (2E,6E)-farnesyl diphosphate = (1S,2S,4R)-beta-elemene + diphosphate. The protein operates within secondary metabolite biosynthesis; terpenoid biosynthesis. Its function is as follows. Involved in sesquiterpene (C15) biosynthesis. The major products are beta-caryophyllene and alpha-humulene. Does not convert geranyl diphosphate (GPP) to any monoterpenes. The chain is Alpha-humulene/(-)-(E)-beta-caryophyllene synthase from Arabidopsis thaliana (Mouse-ear cress).